A 131-amino-acid polypeptide reads, in one-letter code: D-ribose pyranase (131 aa).

Catalysis depends on H20, which acts as the Proton donor. Residues D28, H98, and 120-122 (YAN) contribute to the substrate site.

The protein belongs to the RbsD / FucU family. RbsD subfamily. Homodecamer.

Its subcellular location is the cytoplasm. The catalysed reaction is beta-D-ribopyranose = beta-D-ribofuranose. Its pathway is carbohydrate metabolism; D-ribose degradation; D-ribose 5-phosphate from beta-D-ribopyranose: step 1/2. Functionally, catalyzes the interconversion of beta-pyran and beta-furan forms of D-ribose. The chain is D-ribose pyranase from Chloroflexus aggregans (strain MD-66 / DSM 9485).